We begin with the raw amino-acid sequence, 759 residues long: Phosphoribosylformylglycinamidine synthase subunit PurL (759 aa).

Histidine 46 is an active-site residue. Residues tyrosine 49 and lysine 88 each coordinate ATP. A Mg(2+)-binding site is contributed by glutamate 90. Substrate-binding positions include 91–94 (SHNH) and arginine 113. The active-site Proton acceptor is histidine 92. Aspartate 114 is a binding site for Mg(2+). Glutamine 237 is a binding site for substrate. A Mg(2+)-binding site is contributed by aspartate 265. 309 to 311 (ESQ) lines the substrate pocket. ATP-binding residues include aspartate 498 and glycine 535. Position 536 (asparagine 536) interacts with Mg(2+). Serine 538 contributes to the substrate binding site.

It belongs to the FGAMS family. In terms of assembly, monomer. Part of the FGAM synthase complex composed of 1 PurL, 1 PurQ and 2 PurS subunits.

It is found in the cytoplasm. The enzyme catalyses N(2)-formyl-N(1)-(5-phospho-beta-D-ribosyl)glycinamide + L-glutamine + ATP + H2O = 2-formamido-N(1)-(5-O-phospho-beta-D-ribosyl)acetamidine + L-glutamate + ADP + phosphate + H(+). Its pathway is purine metabolism; IMP biosynthesis via de novo pathway; 5-amino-1-(5-phospho-D-ribosyl)imidazole from N(2)-formyl-N(1)-(5-phospho-D-ribosyl)glycinamide: step 1/2. Part of the phosphoribosylformylglycinamidine synthase complex involved in the purines biosynthetic pathway. Catalyzes the ATP-dependent conversion of formylglycinamide ribonucleotide (FGAR) and glutamine to yield formylglycinamidine ribonucleotide (FGAM) and glutamate. The FGAM synthase complex is composed of three subunits. PurQ produces an ammonia molecule by converting glutamine to glutamate. PurL transfers the ammonia molecule to FGAR to form FGAM in an ATP-dependent manner. PurS interacts with PurQ and PurL and is thought to assist in the transfer of the ammonia molecule from PurQ to PurL. The sequence is that of Phosphoribosylformylglycinamidine synthase subunit PurL from Anaeromyxobacter dehalogenans (strain 2CP-1 / ATCC BAA-258).